A 237-amino-acid chain; its full sequence is MHKKAVVLYSGGLDSTTCLAIARAEGYEPYAMSFSYGQRHSVELEQAKRNARPMGAVDHLVVEFDYRQVGGSALTSDIAVPKEGVGSDIPVTYVPARNTVFLSFALGWAEVLGAFDIFIGVNALDYSGYPDCRPEYIAAFEAMANLATKAGVEGKGRFRIHTPLIHLTKAEIIRKGLSLGVDYGRTHSCYDPTPEGLACGLCDSCRLRLKGFAEAGVADPVAYATIKNPEVRSQESE.

ATP is bound at residue 9–19 (YSGGLDSTTCL). Residues Cys-189, Cys-199, Cys-202, and Cys-205 each contribute to the Zn(2+) site.

It belongs to the QueC family. The cofactor is Zn(2+).

It carries out the reaction 7-carboxy-7-deazaguanine + NH4(+) + ATP = 7-cyano-7-deazaguanine + ADP + phosphate + H2O + H(+). Its pathway is purine metabolism; 7-cyano-7-deazaguanine biosynthesis. Functionally, catalyzes the ATP-dependent conversion of 7-carboxy-7-deazaguanine (CDG) to 7-cyano-7-deazaguanine (preQ(0)). The sequence is that of 7-cyano-7-deazaguanine synthase from Geobacter metallireducens (strain ATCC 53774 / DSM 7210 / GS-15).